Consider the following 299-residue polypeptide: METEGRRREVVVSSLQFACSDDISTNVAAAERLVREAHAKGANIILIQELFEGYYFCQAQREDFFKRAKPYKNHPTIARMQKLAKELGVVIPVSFFEEANTAHYNSIAIIDADGTDLGIYRKSHIPDGPGYQEKFYFNPGDTGFKVFQTKFAKIGVAICWDQWFPEAARAMVLQGAEILFYPTAIGSEPQDQGLDSRDHWRRVMQGHAGANVVPLVASNRIGKEIIETEHGPSQITFYGTSFIAGPTGEIVAEADDKSEAVLVAQFDLDMIKSKRQSWGVFRDRRPDLYKVLLTMDGNL.

Residues 10–268 form the CN hydrolase domain; the sequence is VVVSSLQFAC…EAVLVAQFDL (259 aa). Glu-49 serves as the catalytic Proton acceptor. Residue Lys-122 is the Proton donor of the active site. The Nucleophile role is filled by Cys-159.

This sequence belongs to the carbon-nitrogen hydrolase superfamily. As to quaternary structure, homooctamer (isoform 2). As to expression, expressed in roots, stems, leaves and flowers.

The catalysed reaction is N-carbamoylputrescine + H2O + 2 H(+) = putrescine + NH4(+) + CO2. Its pathway is amine and polyamine biosynthesis; putrescine biosynthesis via agmatine pathway; putrescine from N-carbamoylputrescine (amidase route): step 1/1. Functionally, involved in polyamine biosynthesis. Catalyzes the hydrolysis of N-carbamoylputrescine to produce putrescine and ammonia. This is N-carbamoylputrescine amidase from Arabidopsis thaliana (Mouse-ear cress).